Here is a 329-residue protein sequence, read N- to C-terminus: DNA-directed RNA polymerase subunit alpha (329 aa).

Positions 1–235 are alpha N-terminal domain (alpha-NTD); it reads MQGSVTEFLK…EQLEAFVDLR (235 aa). The interval 249-329 is alpha C-terminal domain (alpha-CTD); that stretch reads FDPILLRPVD…DWPPASIADE (81 aa).

Belongs to the RNA polymerase alpha chain family. Homodimer. The RNAP catalytic core consists of 2 alpha, 1 beta, 1 beta' and 1 omega subunit. When a sigma factor is associated with the core the holoenzyme is formed, which can initiate transcription.

The catalysed reaction is RNA(n) + a ribonucleoside 5'-triphosphate = RNA(n+1) + diphosphate. In terms of biological role, DNA-dependent RNA polymerase catalyzes the transcription of DNA into RNA using the four ribonucleoside triphosphates as substrates. This chain is DNA-directed RNA polymerase subunit alpha, found in Salmonella choleraesuis (strain SC-B67).